The following is a 165-amino-acid chain: Yapsin-5 (165 aa).

The N-terminal stretch at 1-24 (MQLFSILSLLSSLMCSLTVLGSSA) is a signal peptide. Asn57 carries N-linked (GlcNAc...) asparagine glycosylation. A Peptidase A1 domain is found at 67–165 (YVVKMEIGTP…TRLSSMTYTY (99 aa)).

This sequence belongs to the peptidase A1 family.

This chain is Yapsin-5 (YPS5), found in Saccharomyces cerevisiae (strain ATCC 204508 / S288c) (Baker's yeast).